The sequence spans 469 residues: MTSQLHKKGEAWSARFSEPMSELVKRYTSSVFFDKRLALVDIAGSLAHANMLAAQKIISADDLAAIERGMAQIKGEIERGEFEWQLDLEDVHLNIEARLTALIGDAGKRLHTGRSRNDQVATDIRLWLRGEIDRIGGLLNDLRGALIDLAEQNADTIMPGFTHLQVAQPVTFGHHLLAYVEMFTRDAERMRDCRTRVNRLPLGAAALAGTSYPIDRHAVAKTLGFDGICANSLDAVSDRDFAIEFTAASALVMTHVSRFSEELVLWMSPRVGFIDIADRFCTGSSIMPQKKNPDVPELARGKTGRVNGHLMALLTLMKGQPLAYNKDNQEDKEPLFDTVDTVADTLRIFAEMVAGITVKPDAMRAAALQGFSTATDLADYLVKRGLPFRDAHEAVAHAVKICDDRGIDLADLTLDEMKQELPNVAHLIGDDVFGYLTLEGSVASRNHPGGTAPDQVRAAVKAARAALGK.

The protein belongs to the lyase 1 family. Argininosuccinate lyase subfamily.

It localises to the cytoplasm. The enzyme catalyses 2-(N(omega)-L-arginino)succinate = fumarate + L-arginine. It participates in amino-acid biosynthesis; L-arginine biosynthesis; L-arginine from L-ornithine and carbamoyl phosphate: step 3/3. This is Argininosuccinate lyase from Burkholderia cenocepacia (strain ATCC BAA-245 / DSM 16553 / LMG 16656 / NCTC 13227 / J2315 / CF5610) (Burkholderia cepacia (strain J2315)).